The sequence spans 415 residues: 4-hydroxy-3-methylbut-2-enyl diphosphate reductase (415 aa).

Cysteine 66 contacts [4Fe-4S] cluster. A (2E)-4-hydroxy-3-methylbut-2-enyl diphosphate-binding site is contributed by histidine 96. Dimethylallyl diphosphate is bound at residue histidine 96. Position 96 (histidine 96) interacts with isopentenyl diphosphate. A [4Fe-4S] cluster-binding site is contributed by cysteine 158. Histidine 186 contacts (2E)-4-hydroxy-3-methylbut-2-enyl diphosphate. Histidine 186 lines the dimethylallyl diphosphate pocket. Histidine 186 is an isopentenyl diphosphate binding site. The active-site Proton donor is the glutamate 188. Residue threonine 259 participates in (2E)-4-hydroxy-3-methylbut-2-enyl diphosphate binding. Cysteine 297 contacts [4Fe-4S] cluster. Serine 326, serine 327, asparagine 328, and serine 388 together coordinate (2E)-4-hydroxy-3-methylbut-2-enyl diphosphate. Positions 326, 327, 328, and 388 each coordinate dimethylallyl diphosphate. Serine 326, serine 327, asparagine 328, and serine 388 together coordinate isopentenyl diphosphate.

The protein belongs to the IspH family. [4Fe-4S] cluster is required as a cofactor.

It catalyses the reaction isopentenyl diphosphate + 2 oxidized [2Fe-2S]-[ferredoxin] + H2O = (2E)-4-hydroxy-3-methylbut-2-enyl diphosphate + 2 reduced [2Fe-2S]-[ferredoxin] + 2 H(+). It carries out the reaction dimethylallyl diphosphate + 2 oxidized [2Fe-2S]-[ferredoxin] + H2O = (2E)-4-hydroxy-3-methylbut-2-enyl diphosphate + 2 reduced [2Fe-2S]-[ferredoxin] + 2 H(+). Its pathway is isoprenoid biosynthesis; dimethylallyl diphosphate biosynthesis; dimethylallyl diphosphate from (2E)-4-hydroxy-3-methylbutenyl diphosphate: step 1/1. The protein operates within isoprenoid biosynthesis; isopentenyl diphosphate biosynthesis via DXP pathway; isopentenyl diphosphate from 1-deoxy-D-xylulose 5-phosphate: step 6/6. In terms of biological role, catalyzes the conversion of 1-hydroxy-2-methyl-2-(E)-butenyl 4-diphosphate (HMBPP) into a mixture of isopentenyl diphosphate (IPP) and dimethylallyl diphosphate (DMAPP). Acts in the terminal step of the DOXP/MEP pathway for isoprenoid precursor biosynthesis. The polypeptide is 4-hydroxy-3-methylbut-2-enyl diphosphate reductase (Acaryochloris marina (strain MBIC 11017)).